The following is a 481-amino-acid chain: Glutamate--tRNA ligase (481 aa).

Positions 11–21 match the 'HIGH' region motif; it reads PSPTGLLHIGN. Positions 255–259 match the 'KMSKS' region motif; it reads KLSKR. Lys-258 contacts ATP.

It belongs to the class-I aminoacyl-tRNA synthetase family. Glutamate--tRNA ligase type 1 subfamily. As to quaternary structure, monomer.

The protein resides in the cytoplasm. It carries out the reaction tRNA(Glu) + L-glutamate + ATP = L-glutamyl-tRNA(Glu) + AMP + diphosphate. In terms of biological role, catalyzes the attachment of glutamate to tRNA(Glu) in a two-step reaction: glutamate is first activated by ATP to form Glu-AMP and then transferred to the acceptor end of tRNA(Glu). This chain is Glutamate--tRNA ligase, found in Streptococcus pyogenes serotype M3 (strain ATCC BAA-595 / MGAS315).